The primary structure comprises 494 residues: Alpha-amylase-related protein (494 aa).

The signal sequence occupies residues 1-20 (MIKFALALTLCLAGASLSLA). A Pyrrolidone carboxylic acid modification is found at Gln-21. Cysteines 48 and 104 form a disulfide. The Ca(2+) site is built by Asn-118, Gln-169, and Asp-178. Cys-157 and Cys-171 are disulfide-bonded. Arg-206 lines the chloride pocket. Asp-208 (nucleophile) is an active-site residue. A Ca(2+)-binding site is contributed by His-212. Glu-245 acts as the Proton donor in catalysis. Chloride is bound by residues Asn-308 and Arg-343. 3 disulfide bridges follow: Cys-376–Cys-382, Cys-418–Cys-441, and Cys-448–Cys-460.

Belongs to the glycosyl hydrolase 13 family. In terms of assembly, monomer. Ca(2+) serves as cofactor. Chloride is required as a cofactor.

Its subcellular location is the secreted. It catalyses the reaction Endohydrolysis of (1-&gt;4)-alpha-D-glucosidic linkages in polysaccharides containing three or more (1-&gt;4)-alpha-linked D-glucose units.. The chain is Alpha-amylase-related protein (Amyrel) from Drosophila jambulina (Fruit fly).